The sequence spans 602 residues: Major facilitator superfamily multidrug transporter mfsB (602 aa).

Transmembrane regions (helical) follow at residues 29–49 (FVLA…FPYV), 67–87 (LYAG…GMFW), 98–118 (PVLI…GFAP), 128–148 (ALGG…AEIV), 160–180 (IMPF…GALA), 201–221 (FLLP…VGFL), 329–349 (IVAY…IPVF), 378–398 (FMLA…FPFV), 411–431 (VLLV…LPSI), 439–459 (LALI…AILL), 468–486 (VLGS…SRAL), and 505–525 (IIAW…SFWM). The segment at 527-602 (ESEPRRDSEK…RSNPLAFAED (76 aa)) is disordered. A compositionally biased stretch (basic and acidic residues) spans 528-538 (SEPRRDSEKAG).

It belongs to the major facilitator superfamily.

Its subcellular location is the membrane. Functionally, major facilitator superfamily transporter that may be involved in A.fumigatus adaptation to azoles such as vorizonazole. The protein is Major facilitator superfamily multidrug transporter mfsB of Aspergillus fumigatus (strain ATCC MYA-4609 / CBS 101355 / FGSC A1100 / Af293) (Neosartorya fumigata).